The following is a 203-amino-acid chain: MDKAFDEIIGNSHTDSSSNHKVTRYRRRDLRNELGPRLGFAPSDAASRSKDRLYREREEPPLPKRIRISKIPLDVSDYTLDDMIKEFGSPIFSKIFDNKEDRTCIYEFEDPEVLEKIVERYNGYELHNAKIEVEIYQPQRKHSRMNAHNRRKQTAQEQGRGRPGSHYRQRPNRVSKKNKGREKNNTPTSVEALDAELDAYMKG.

Met1 is modified (N-acetylmethionine). Disordered stretches follow at residues 1-60 and 137-203; these read MDKA…REEP and QPQR…YMKG. Positions 11 to 20 are enriched in polar residues; the sequence is NSHTDSSSNH. A compositionally biased stretch (basic and acidic residues) spans 47-60; that stretch reads SRSKDRLYREREEP. In terms of domain architecture, RRM spans 64 to 138; sequence KRIRISKIPL…AKIEVEIYQP (75 aa). Basic residues-rich tracts occupy residues 139-153 and 163-180; these read QRKH…RRKQ and PGSH…KNKG.

This sequence belongs to the YRA1 family. In terms of assembly, associates with mRNPs. Interacts with YRA1.

The protein localises to the nucleus. In terms of biological role, involved in export of poly(A) mRNAs from the nucleus. Recruited to the coding sequences as well as poly-A sites of active genes. This Saccharomyces cerevisiae (strain Lalvin EC1118 / Prise de mousse) (Baker's yeast) protein is RNA annealing protein YRA2 (YRA2).